The sequence spans 368 residues: MVHYRNRYLNYIRRKPLALLAPITLLVVIYFYFFSAHGFSSNKQKYNYNKKSRGWFYKNRDTVILKDLPKNHISHYDLNKLTASKDALNKREEVLILTPMSKFLPEYWENINKLTYDHSLISLGFIFPRTTQGDDALKELENALKKTKREKRLNFKKITILRQDSNSLQSQLEKDRHAFKVQKERRSMMALARNSLVFSTILPSTSWVLWLDADIVETPVTLIQDLTGHNKPVVSANVHQRFINQDTKQPDIRPYDFNNWVESEEGLKLAASLPDDEIIVEGYSEMVTHRALMAHFYDPKGDPSTEMTLDGVGGGAVMVKADVHRDGAMFPSFPFYHLIETEGFAKMAKRLGYEVYGLPNYLVFHYNE.

Residues 1–15 (MVHYRNRYLNYIRRK) are Cytoplasmic-facing. Residues 16-33 (PLALLAPITLLVVIYFYF) form a helical; Signal-anchor for type II membrane protein membrane-spanning segment. Residues 34–368 (FSAHGFSSNK…PNYLVFHYNE (335 aa)) lie on the Lumenal side of the membrane.

Belongs to the ANP1/MMN9/VAN1 family.

It is found in the golgi apparatus membrane. Its pathway is protein modification; protein glycosylation. Its function is as follows. Required for the addition of the long alpha 1,6-mannose backbone of N-linked glycans on cell wall and periplasmic proteins. The sequence is that of Mannan polymerase complex subunit MNN9 (MNN9) from Candida albicans (strain SC5314 / ATCC MYA-2876) (Yeast).